The sequence spans 884 residues: Cytosolic carboxypeptidase-like protein 5 (884 aa).

The Peptidase M14 domain maps to 157–570 (YPFSYSDCQD…AMAIAALDMA (414 aa)). Zn(2+) contacts are provided by His252 and Glu255. Disordered regions lie at residues 343-364 (HPQS…PLSD) and 376-401 (HLGH…KASG). His434 lines the Zn(2+) pocket. Catalysis depends on Glu516, which acts as the Proton donor/acceptor. Disordered regions lie at residues 603-737 (LSST…HSTG) and 784-859 (QVRP…RICY). Residues 620–635 (PPRSNSGLPVSCSENP) show a composition bias toward polar residues. Low complexity-rich tracts occupy residues 641–666 (SFST…NSPS) and 714–737 (PTSS…HSTG). At Ser839 the chain carries Phosphoserine. Polar residues predominate over residues 846–857 (ISCSLSDSQSRI).

It belongs to the peptidase M14 family. It depends on Zn(2+) as a cofactor.

It localises to the cytoplasm. Its subcellular location is the cytosol. The protein localises to the nucleus. The protein resides in the cytoskeleton. It is found in the spindle. It localises to the midbody. It carries out the reaction gamma-L-glutamyl-L-glutamyl-[protein] + H2O = L-glutamyl-[protein] + L-glutamate. The catalysed reaction is (L-glutamyl)(n+1)-gamma-L-glutamyl-L-glutamyl-[protein] + H2O = (L-glutamyl)(n)-gamma-L-glutamyl-L-glutamyl-[protein] + L-glutamate. The enzyme catalyses C-terminal L-alpha-aminoacyl-L-glutamyl-[tubulin] + H2O = C-terminal L-alpha-aminoacyl-[tubulin] + L-glutamate. It catalyses the reaction C-terminal L-alpha-aminoacyl-L-glutamyl-L-glutamyl-[tubulin] + H2O = C-terminal L-alpha-aminoacyl-L-glutamyl-[tubulin] + L-glutamate. Its function is as follows. Metallocarboxypeptidase that mediates deglutamylation of tubulin and non-tubulin target proteins. Catalyzes the removal of polyglutamate side chains present on the gamma-carboxyl group of glutamate residues within the C-terminal tail of alpha- and beta-tubulin. Cleaves alpha- and gamma-linked polyglutamate tubulin side-chain, as well as the branching point glutamate. Also catalyzes the removal of alpha-linked glutamate residues from the carboxy-terminus of alpha-tubulin. Mediates deglutamylation of nucleotidyltransferase CGAS, leading to CGAS antiviral defense response activation. In Ailuropoda melanoleuca (Giant panda), this protein is Cytosolic carboxypeptidase-like protein 5 (AGBL5).